Reading from the N-terminus, the 514-residue chain is Light-independent protochlorophyllide reductase subunit B (514 aa).

Residue Asp-36 participates in [4Fe-4S] cluster binding. Catalysis depends on Asp-300, which acts as the Proton donor. 435 to 436 is a substrate binding site; it reads GM.

It belongs to the ChlB/BchB/BchZ family. In terms of assembly, protochlorophyllide reductase is composed of three subunits; ChlL, ChlN and ChlB. Forms a heterotetramer of two ChlB and two ChlN subunits. [4Fe-4S] cluster is required as a cofactor.

It is found in the plastid. It localises to the chloroplast. It catalyses the reaction chlorophyllide a + oxidized 2[4Fe-4S]-[ferredoxin] + 2 ADP + 2 phosphate = protochlorophyllide a + reduced 2[4Fe-4S]-[ferredoxin] + 2 ATP + 2 H2O. It participates in porphyrin-containing compound metabolism; chlorophyll biosynthesis (light-independent). Its function is as follows. Component of the dark-operative protochlorophyllide reductase (DPOR) that uses Mg-ATP and reduced ferredoxin to reduce ring D of protochlorophyllide (Pchlide) to form chlorophyllide a (Chlide). This reaction is light-independent. The NB-protein (ChlN-ChlB) is the catalytic component of the complex. The chain is Light-independent protochlorophyllide reductase subunit B from Pleurastrum terricola (Filamentous green alga).